Consider the following 479-residue polypeptide: Ribulose bisphosphate carboxylase large chain (479 aa).

A propeptide spanning residues methionine 1 to serine 2 is cleaved from the precursor. Substrate-binding residues include asparagine 123 and threonine 173. Residue lysine 175 is the Proton acceptor of the active site. A substrate-binding site is contributed by lysine 177. Lysine 201, aspartate 203, and glutamate 204 together coordinate Mg(2+). An N6-carboxylysine modification is found at lysine 201. Position 208 is a phosphoserine (serine 208). The Proton acceptor role is filled by histidine 294. Substrate is bound by residues arginine 295 and histidine 327. At threonine 330 the chain carries Phosphothreonine. Substrate is bound at residue serine 379.

This sequence belongs to the RuBisCO large chain family. Type I subfamily. As to quaternary structure, heterohexadecamer of 8 large chains and 8 small chains; disulfide-linked. The disulfide link is formed within the large subunit homodimers. It depends on Mg(2+) as a cofactor. Post-translationally, the disulfide bond which can form in the large chain dimeric partners within the hexadecamer appears to be associated with oxidative stress and protein turnover.

It localises to the plastid. Its subcellular location is the chloroplast. It catalyses the reaction 2 (2R)-3-phosphoglycerate + 2 H(+) = D-ribulose 1,5-bisphosphate + CO2 + H2O. The catalysed reaction is D-ribulose 1,5-bisphosphate + O2 = 2-phosphoglycolate + (2R)-3-phosphoglycerate + 2 H(+). RuBisCO catalyzes two reactions: the carboxylation of D-ribulose 1,5-bisphosphate, the primary event in carbon dioxide fixation, as well as the oxidative fragmentation of the pentose substrate in the photorespiration process. Both reactions occur simultaneously and in competition at the same active site. This chain is Ribulose bisphosphate carboxylase large chain, found in Arabis hirsuta (Hairy rock-cress).